The primary structure comprises 586 residues: Glutamine--tRNA ligase (586 aa).

The short motif at 58 to 68 (PEPNGYLHIGH) is the 'HIGH' region element. ATP is bound by residues 59-61 (EPN) and 65-71 (HIGHAKS). Positions 91 and 240 each coordinate L-glutamine. Residues T259 and 294–295 (RL) each bind ATP. The short motif at 301 to 305 (VTSKR) is the 'KMSKS' region element.

Belongs to the class-I aminoacyl-tRNA synthetase family. As to quaternary structure, monomer.

The protein localises to the cytoplasm. The enzyme catalyses tRNA(Gln) + L-glutamine + ATP = L-glutaminyl-tRNA(Gln) + AMP + diphosphate. This is Glutamine--tRNA ligase from Bordetella avium (strain 197N).